Reading from the N-terminus, the 129-residue chain is Modulator protein MzrA (129 aa).

Residues methionine 1 to histidine 14 are Cytoplasmic-facing. A helical transmembrane segment spans residues tyrosine 15–valine 35. Residues glutamine 36–glycine 129 lie on the Periplasmic side of the membrane.

The protein belongs to the MzrA family. Interacts with EnvZ.

Its subcellular location is the cell inner membrane. Functionally, modulates the activity of the EnvZ/OmpR two-component regulatory system, probably by directly modulating EnvZ enzymatic activity and increasing stability of phosphorylated OmpR. This chain is Modulator protein MzrA, found in Yersinia pestis (strain Pestoides F).